The primary structure comprises 76 residues: DNA-directed RNA polymerase subunit omega (76 aa).

The protein belongs to the RNA polymerase subunit omega family. In terms of assembly, the RNAP catalytic core consists of 2 alpha, 1 beta, 1 beta' and 1 omega subunit. When a sigma factor is associated with the core the holoenzyme is formed, which can initiate transcription.

The catalysed reaction is RNA(n) + a ribonucleoside 5'-triphosphate = RNA(n+1) + diphosphate. Its function is as follows. Promotes RNA polymerase assembly. Latches the N- and C-terminal regions of the beta' subunit thereby facilitating its interaction with the beta and alpha subunits. This chain is DNA-directed RNA polymerase subunit omega (rpoZ), found in Aquifex aeolicus (strain VF5).